Consider the following 432-residue polypeptide: Transcobalamin-2 (432 aa).

An N-terminal signal peptide occupies residues 1–18; that stretch reads MGHLGALLFLLGGLGALA. Cystine bridges form between C21-C270, C116-C312, and C165-C208. N-linked (GlcNAc...) asparagine glycosylation is present at N94. Residues Q104, 152 to 156, H193, 193 to 197, N245, S248, Q294, and 400 to 402 each bind cob(II)alamin; these read TSYYQ, HVSVD, and WQV.

The protein belongs to the eukaryotic cobalamin transport proteins family. Interacts with CD320 (via LDL-receptor class A domains). In terms of tissue distribution, expressed in mammary gland, kidney, lymphatic nodes and liver.

It is found in the secreted. Primary vitamin B12-binding and transport protein. Delivers cobalamin to cells. The protein is Transcobalamin-2 (TCN2) of Bos taurus (Bovine).